An 815-amino-acid chain; its full sequence is Probable inorganic carbon transporter subunit DabA (815 aa).

Residues Cys-334, Asp-336, His-507, and Cys-522 each coordinate Zn(2+).

Belongs to the inorganic carbon transporter (TC 9.A.2) DabA family. In terms of assembly, forms a complex with DabB. Requires Zn(2+) as cofactor.

It localises to the cell inner membrane. Its function is as follows. Part of an energy-coupled inorganic carbon pump. This Ectopseudomonas mendocina (strain ymp) (Pseudomonas mendocina) protein is Probable inorganic carbon transporter subunit DabA.